A 449-amino-acid polypeptide reads, in one-letter code: Adenosylhomocysteinase (449 aa).

Ser2 carries the N-acetylserine modification. A Glycyl lysine isopeptide (Lys-Gly) (interchain with G-Cter in ubiquitin) cross-link involves residue Lys21. Thr58, Asp134, and Glu159 together coordinate substrate. 160–162 (TTT) serves as a coordination point for NAD(+). Substrate is bound by residues Lys189 and Asp193. Residues Asn194, 223-228 (GYGDVG), Glu246, 302-304 (IGH), and Asn349 each bind NAD(+). At Thr393 the chain carries Phosphothreonine. A Glycyl lysine isopeptide (Lys-Gly) (interchain with G-Cter in ubiquitin) cross-link involves residue Lys413.

Belongs to the adenosylhomocysteinase family. NAD(+) serves as cofactor.

The enzyme catalyses S-adenosyl-L-homocysteine + H2O = L-homocysteine + adenosine. It participates in amino-acid biosynthesis; L-homocysteine biosynthesis; L-homocysteine from S-adenosyl-L-homocysteine: step 1/1. Its function is as follows. Adenosylhomocysteine is a competitive inhibitor of S-adenosyl-L-methionine-dependent methyl transferase reactions; therefore adenosylhomocysteinase may play a key role in the control of methylations via regulation of the intracellular concentration of adenosylhomocysteine. This chain is Adenosylhomocysteinase (SAH1), found in Saccharomyces cerevisiae (strain ATCC 204508 / S288c) (Baker's yeast).